The primary structure comprises 37 residues: Large ribosomal subunit protein bL36 (37 aa).

It belongs to the bacterial ribosomal protein bL36 family.

This chain is Large ribosomal subunit protein bL36, found in Nocardia farcinica (strain IFM 10152).